We begin with the raw amino-acid sequence, 217 residues long: Adenylate kinase (217 aa).

An ATP-binding site is contributed by 10–15 (GAGKGT). The tract at residues 30 to 59 (STGDMLRAAVKAGTPLGLEAKKVMDSGGLV) is NMP. AMP contacts are provided by residues Thr31, Arg36, 57–59 (GLV), 85–88 (GFPR), and Gln92. Residues 122-159 (GRRVHVASGRTYHVKFNPPKVAGVDDVTGEPLIQRDDD) form an LID region. ATP-binding positions include Arg123 and 132 to 133 (TY). 2 residues coordinate AMP: Arg156 and Arg167. Gly203 is an ATP binding site.

Belongs to the adenylate kinase family. As to quaternary structure, monomer.

The protein localises to the cytoplasm. The enzyme catalyses AMP + ATP = 2 ADP. It functions in the pathway purine metabolism; AMP biosynthesis via salvage pathway; AMP from ADP: step 1/1. Its function is as follows. Catalyzes the reversible transfer of the terminal phosphate group between ATP and AMP. Plays an important role in cellular energy homeostasis and in adenine nucleotide metabolism. This is Adenylate kinase from Methylibium petroleiphilum (strain ATCC BAA-1232 / LMG 22953 / PM1).